Here is a 169-residue protein sequence, read N- to C-terminus: Putative phosphoesterase SE_0715 (169 aa).

Histidine 34 functions as the Proton donor in the catalytic mechanism. Short sequence motifs (HXTX) lie at residues 34–37 and 115–118; these read HITI and HFTI. Histidine 115 functions as the Proton acceptor in the catalytic mechanism.

The protein belongs to the 2H phosphoesterase superfamily. YjcG family.

The sequence is that of Putative phosphoesterase SE_0715 from Staphylococcus epidermidis (strain ATCC 12228 / FDA PCI 1200).